The sequence spans 318 residues: L-malyl-CoA/beta-methylmalyl-CoA lyase (318 aa).

Substrate contacts are provided by Phe19, Arg24, Lys30, and Arg76. 2 residues coordinate Mg(2+): Glu141 and Asp168. Residues 167-168 and 251-252 contribute to the substrate site; these read AD and IH.

It belongs to the HpcH/HpaI aldolase family. In terms of assembly, homohexamer. Dimer of trimers. Requires Mg(2+) as cofactor. Mn(2+) is required as a cofactor.

The catalysed reaction is (S)-malyl-CoA = glyoxylate + acetyl-CoA. The enzyme catalyses (2R,3S)-beta-methylmalyl-CoA = propanoyl-CoA + glyoxylate. With respect to regulation, in vitro inhibited by EDTA. Functionally, involved in the ethylmalonyl-CoA pathway for acetate assimilation. Catalyzes the reversible condensation of glyoxylate and acetyl-CoA to L-malyl-CoA and the reversible condensation of glyoxylate and propionyl-CoA to beta-methylmalyl-CoA. This chain is L-malyl-CoA/beta-methylmalyl-CoA lyase, found in Rhodobacter capsulatus (Rhodopseudomonas capsulata).